The following is a 232-amino-acid chain: Putative N-acetylmannosamine-6-phosphate 2-epimerase (232 aa).

This sequence belongs to the NanE family.

It catalyses the reaction an N-acyl-D-glucosamine 6-phosphate = an N-acyl-D-mannosamine 6-phosphate. It participates in amino-sugar metabolism; N-acetylneuraminate degradation; D-fructose 6-phosphate from N-acetylneuraminate: step 3/5. In terms of biological role, converts N-acetylmannosamine-6-phosphate (ManNAc-6-P) to N-acetylglucosamine-6-phosphate (GlcNAc-6-P). The chain is Putative N-acetylmannosamine-6-phosphate 2-epimerase from Borrelia garinii subsp. bavariensis (strain ATCC BAA-2496 / DSM 23469 / PBi) (Borreliella bavariensis).